Here is a 648-residue protein sequence, read N- to C-terminus: Exoribonuclease 2 (648 aa).

The RNB domain maps to 191 to 518; it reads RIDLTYLDFI…INHRLIKSII (328 aa). An S1 motif domain is found at 565–647; sequence KKKYQANIID…GNKKIIATMI (83 aa).

This sequence belongs to the RNR ribonuclease family. RNase II subfamily.

The protein resides in the cytoplasm. The enzyme catalyses Exonucleolytic cleavage in the 3'- to 5'-direction to yield nucleoside 5'-phosphates.. Its function is as follows. Involved in mRNA degradation. Hydrolyzes single-stranded polyribonucleotides processively in the 3' to 5' direction. This Buchnera aphidicola subsp. Cinara cedri (strain Cc) protein is Exoribonuclease 2.